The following is a 161-amino-acid chain: Nucleotide-binding protein Rpic_2826 (161 aa).

The protein belongs to the YajQ family.

Its function is as follows. Nucleotide-binding protein. The chain is Nucleotide-binding protein Rpic_2826 from Ralstonia pickettii (strain 12J).